A 794-amino-acid chain; its full sequence is DNA ligase (794 aa).

The disordered stretch occupies residues 1–47 (MEEDLFSLAAGKQPSQQATNETAPRAGEARENAGTDHPGNAEDPAHR). A compositionally biased stretch (polar residues) spans 13 to 22 (QPSQQATNET). A compositionally biased stretch (basic and acidic residues) spans 27–47 (GEARENAGTDHPGNAEDPAHR). NAD(+) contacts are provided by residues 73 to 77 (DAEYD), 122 to 123 (SI), and glutamate 160. The N6-AMP-lysine intermediate role is filled by lysine 162. NAD(+) contacts are provided by arginine 183, glutamate 219, lysine 335, and lysine 359. Cysteine 457, cysteine 460, cysteine 475, and cysteine 480 together coordinate Zn(2+). The region spanning 717–794 (IPAGSLSGKT…EEDFYKMIGN (78 aa)) is the BRCT domain.

The protein belongs to the NAD-dependent DNA ligase family. LigA subfamily. It depends on Mg(2+) as a cofactor. The cofactor is Mn(2+).

It carries out the reaction NAD(+) + (deoxyribonucleotide)n-3'-hydroxyl + 5'-phospho-(deoxyribonucleotide)m = (deoxyribonucleotide)n+m + AMP + beta-nicotinamide D-nucleotide.. Functionally, DNA ligase that catalyzes the formation of phosphodiester linkages between 5'-phosphoryl and 3'-hydroxyl groups in double-stranded DNA using NAD as a coenzyme and as the energy source for the reaction. It is essential for DNA replication and repair of damaged DNA. This is DNA ligase from Akkermansia muciniphila (strain ATCC BAA-835 / DSM 22959 / JCM 33894 / BCRC 81048 / CCUG 64013 / CIP 107961 / Muc).